Consider the following 300-residue polypeptide: MDINKVLKERQKWFEWKNIKPIYEKIVQWQIENKQLNVKNVKLNDIIEITLDENKEKLKEIEQIAKMLKPWRKGPFKINDLFIDTEWRSFIKWNIIKPHINLENKDVLDVGCNNGYYMFRMLEMNPKSITGFDPSALFNLQFEFINNFIKSDIEYKLLGVEHIPFYDKKFDTIFCLGVLYHRPDPITMLKELKAGLNPGGEVILDTLIIEGDEEIALCPVRYQKMKNVYFIPTLKALYNWIEKAKFKDVKFIGKRYTDLEEQRKTDWIEGESLNNFLNEDLTKTVEGYPPPLRVYLKLKN.

Carboxy-S-adenosyl-L-methionine contacts are provided by residues Lys73, Trp87, Lys92, Gly111, 133–135 (DPS), 160–161 (VE), Tyr180, and Arg293.

The protein belongs to the class I-like SAM-binding methyltransferase superfamily. CmoB family. Homotetramer.

It catalyses the reaction carboxy-S-adenosyl-L-methionine + 5-hydroxyuridine(34) in tRNA = 5-carboxymethoxyuridine(34) in tRNA + S-adenosyl-L-homocysteine + H(+). Its function is as follows. Catalyzes carboxymethyl transfer from carboxy-S-adenosyl-L-methionine (Cx-SAM) to 5-hydroxyuridine (ho5U) to form 5-carboxymethoxyuridine (cmo5U) at position 34 in tRNAs. This Nautilia profundicola (strain ATCC BAA-1463 / DSM 18972 / AmH) protein is tRNA U34 carboxymethyltransferase.